Here is a 145-residue protein sequence, read N- to C-terminus: Large ribosomal subunit protein bL9 (145 aa).

This sequence belongs to the bacterial ribosomal protein bL9 family.

Functionally, binds to the 23S rRNA. The sequence is that of Large ribosomal subunit protein bL9 from Mesomycoplasma hyopneumoniae (strain 232) (Mycoplasma hyopneumoniae).